We begin with the raw amino-acid sequence, 59 residues long: Protein QUA-QUINE STARCH (59 aa).

In terms of tissue distribution, expressed in hypocotyls, leaves, vasculature, hydathodes, trichomes, pedicels, sepals, filaments, mature pollen, stigma papillae, styles, siliques, root and shoot tips, but not in shoot meristem, petals or root epidermis.

It localises to the cytoplasm. Functionally, involved in regulating carbon and nitrogen allocation to starch and protein. The protein is Protein QUA-QUINE STARCH of Arabidopsis thaliana (Mouse-ear cress).